Here is a 928-residue protein sequence, read N- to C-terminus: Nitrogen network kinase 1 (928 aa).

Residues 1–12 (MFTSQRQLRQNG) are compositionally biased toward polar residues. Disordered stretches follow at residues 1-43 (MFTS…SYGR) and 81-118 (HEHP…LELG). The span at 13 to 29 (SPMSSSRSSQHSSGTAS) shows a compositional bias: low complexity. 2 stretches are compositionally biased toward polar residues: residues 30-40 (PISDSPASNRS) and 86-107 (RSTL…SQVN). 2 positions are modified to phosphoserine: Ser-178 and Ser-179. The disordered stretch occupies residues 374–394 (ANDDNINSRNTPNNSNDTYVN). Residues 375 to 391 (NDDNINSRNTPNNSNDT) show a composition bias toward low complexity. Residues Ser-405 and Ser-426 each carry the phosphoserine modification. The 464-residue stretch at 449–912 (HRLGKIIGFG…WKLKRIEEVL (464 aa)) folds into the Protein kinase domain. ATP is bound by residues 455–463 (IGFGAWGII) and Lys-478. The Proton acceptor role is filled by Asp-580. 2 disordered regions span residues 670-741 (ENRK…KYIG) and 767-813 (YDSP…SGSS). Residues 683 to 696 (VSSSSHSLKHLNQP) are compositionally biased toward polar residues. Phosphoserine is present on Ser-737. Tyr-739 is modified (phosphotyrosine). Positions 769 to 813 (SPDSSQSEISAASSSSSNLSSLSSSTKASAVTNSGVTTSSPSGSS) are enriched in low complexity.

This sequence belongs to the protein kinase superfamily. Ser/Thr protein kinase family. Interacts with URE2 and GDH2. Also interacts with the TORC1 kinase complex.

The protein localises to the cytoplasm. It catalyses the reaction L-seryl-[protein] + ATP = O-phospho-L-seryl-[protein] + ADP + H(+). It carries out the reaction L-threonyl-[protein] + ATP = O-phospho-L-threonyl-[protein] + ADP + H(+). Serine/threonine-protein kinase involved in the phosphorylation of the NAD(+)-dependent glutamate dehydrogenase GDH2. When overexpressed, confers hypersensitivity to rapamycin and induces rapid nuclear accumulation of GLN3 to activate the transcription of nitrogen-regulated genes. The polypeptide is Nitrogen network kinase 1 (NNK1) (Saccharomyces cerevisiae (strain ATCC 204508 / S288c) (Baker's yeast)).